The sequence spans 334 residues: Ornithine carbamoyltransferase (334 aa).

Carbamoyl phosphate-binding positions include 57–60, Gln84, Arg108, and 135–138; these read STRT and HPTQ. Residues Asn169, Asp233, and 237-238 contribute to the L-ornithine site; that span reads SM. Carbamoyl phosphate is bound by residues 275–276 and Arg320; that span reads CL.

This sequence belongs to the aspartate/ornithine carbamoyltransferase superfamily. OTCase family.

It is found in the cytoplasm. The catalysed reaction is carbamoyl phosphate + L-ornithine = L-citrulline + phosphate + H(+). The protein operates within amino-acid biosynthesis; L-arginine biosynthesis; L-arginine from L-ornithine and carbamoyl phosphate: step 1/3. Its function is as follows. Reversibly catalyzes the transfer of the carbamoyl group from carbamoyl phosphate (CP) to the N(epsilon) atom of ornithine (ORN) to produce L-citrulline. This Aeromonas salmonicida (strain A449) protein is Ornithine carbamoyltransferase.